Here is a 141-residue protein sequence, read N- to C-terminus: Nucleoside diphosphate kinase (141 aa).

Positions 11, 59, 87, 93, 104, and 114 each coordinate ATP. The active-site Pros-phosphohistidine intermediate is His117.

Belongs to the NDK family. As to quaternary structure, homotetramer. The cofactor is Mg(2+).

The protein resides in the cytoplasm. The enzyme catalyses a 2'-deoxyribonucleoside 5'-diphosphate + ATP = a 2'-deoxyribonucleoside 5'-triphosphate + ADP. It catalyses the reaction a ribonucleoside 5'-diphosphate + ATP = a ribonucleoside 5'-triphosphate + ADP. Major role in the synthesis of nucleoside triphosphates other than ATP. The ATP gamma phosphate is transferred to the NDP beta phosphate via a ping-pong mechanism, using a phosphorylated active-site intermediate. This is Nucleoside diphosphate kinase from Paraburkholderia phymatum (strain DSM 17167 / CIP 108236 / LMG 21445 / STM815) (Burkholderia phymatum).